The following is a 367-amino-acid chain: 3-dehydroquinate synthase (367 aa).

NAD(+) contacts are provided by residues 69–74 (DGEAFK), 103–107 (GVIGD), 127–128 (TT), lysine 140, and lysine 149. The Zn(2+) site is built by glutamate 182, histidine 245, and histidine 262.

It belongs to the sugar phosphate cyclases superfamily. Dehydroquinate synthase family. The cofactor is Co(2+). Zn(2+) serves as cofactor. Requires NAD(+) as cofactor.

Its subcellular location is the cytoplasm. It catalyses the reaction 7-phospho-2-dehydro-3-deoxy-D-arabino-heptonate = 3-dehydroquinate + phosphate. Its pathway is metabolic intermediate biosynthesis; chorismate biosynthesis; chorismate from D-erythrose 4-phosphate and phosphoenolpyruvate: step 2/7. Functionally, catalyzes the conversion of 3-deoxy-D-arabino-heptulosonate 7-phosphate (DAHP) to dehydroquinate (DHQ). This chain is 3-dehydroquinate synthase, found in Pseudomonas savastanoi pv. phaseolicola (strain 1448A / Race 6) (Pseudomonas syringae pv. phaseolicola (strain 1448A / Race 6)).